Consider the following 446-residue polypeptide: Glutamine synthetase (446 aa).

Residues 14–106 (NNVKFIRFQF…VICDVYTTNG (93 aa)) form the GS beta-grasp domain. Residues 113-446 (PRGCLKRVLA…DWETKQYLKI (334 aa)) enclose the GS catalytic domain. Residues E137 and E139 each contribute to the Mg(2+) site. E187 lines the ATP pocket. Mg(2+) is bound by residues E192 and E199. L-glutamate is bound by residues 243–244 (NG) and G244. Residue H248 participates in Mg(2+) binding. ATP is bound by residues 250–252 (HQS) and S252. The L-glutamate site is built by R301, E307, and R319. ATP-binding residues include R319, R324, and K331. Residue E336 participates in Mg(2+) binding. Residue R338 coordinates L-glutamate.

It belongs to the glutamine synthetase family. In terms of assembly, oligomer of 12 subunits arranged in the form of two hexagons. Mg(2+) serves as cofactor.

The protein localises to the cytoplasm. The enzyme catalyses L-glutamate + NH4(+) + ATP = L-glutamine + ADP + phosphate + H(+). In terms of biological role, probably involved in nitrogen metabolism via ammonium assimilation. Catalyzes the ATP-dependent biosynthesis of glutamine from glutamate and ammonia. The sequence is that of Glutamine synthetase from Methanococcus maripaludis (strain DSM 14266 / JCM 13030 / NBRC 101832 / S2 / LL).